The sequence spans 419 residues: Tyrosine--tRNA ligase (419 aa).

Tyr34 is a binding site for L-tyrosine. A 'HIGH' region motif is present at residues 39-48; the sequence is PTADSLHLGN. Tyr169 and Gln173 together coordinate L-tyrosine. A 'KMSKS' region motif is present at residues 229 to 233; the sequence is KFGKS. Lys232 provides a ligand contact to ATP. Positions 353–419 constitute an S4 RNA-binding domain; sequence LTLIELLISV…GKKKNFVLTY (67 aa).

It belongs to the class-I aminoacyl-tRNA synthetase family. TyrS type 1 subfamily. Homodimer.

It localises to the cytoplasm. It catalyses the reaction tRNA(Tyr) + L-tyrosine + ATP = L-tyrosyl-tRNA(Tyr) + AMP + diphosphate + H(+). Functionally, catalyzes the attachment of tyrosine to tRNA(Tyr) in a two-step reaction: tyrosine is first activated by ATP to form Tyr-AMP and then transferred to the acceptor end of tRNA(Tyr). The chain is Tyrosine--tRNA ligase from Lactococcus lactis subsp. cremoris (strain MG1363).